The following is a 146-amino-acid chain: 3-dehydroquinate dehydratase (146 aa).

The Proton acceptor role is filled by tyrosine 24. Substrate is bound by residues asparagine 75, histidine 81, and aspartate 88. Residue histidine 101 is the Proton donor of the active site. Substrate is bound by residues 102-103 (LS) and arginine 112.

This sequence belongs to the type-II 3-dehydroquinase family. In terms of assembly, homododecamer.

The enzyme catalyses 3-dehydroquinate = 3-dehydroshikimate + H2O. It functions in the pathway metabolic intermediate biosynthesis; chorismate biosynthesis; chorismate from D-erythrose 4-phosphate and phosphoenolpyruvate: step 3/7. Its function is as follows. Catalyzes a trans-dehydration via an enolate intermediate. The chain is 3-dehydroquinate dehydratase from Caulobacter vibrioides (strain ATCC 19089 / CIP 103742 / CB 15) (Caulobacter crescentus).